A 469-amino-acid chain; its full sequence is ATP synthase subunit beta (469 aa).

156–163 (GGAGVGKT) contributes to the ATP binding site.

It belongs to the ATPase alpha/beta chains family. In terms of assembly, F-type ATPases have 2 components, CF(1) - the catalytic core - and CF(0) - the membrane proton channel. CF(1) has five subunits: alpha(3), beta(3), gamma(1), delta(1), epsilon(1). CF(0) has three main subunits: a(1), b(2) and c(9-12). The alpha and beta chains form an alternating ring which encloses part of the gamma chain. CF(1) is attached to CF(0) by a central stalk formed by the gamma and epsilon chains, while a peripheral stalk is formed by the delta and b chains.

Its subcellular location is the cell membrane. It carries out the reaction ATP + H2O + 4 H(+)(in) = ADP + phosphate + 5 H(+)(out). Produces ATP from ADP in the presence of a proton gradient across the membrane. The catalytic sites are hosted primarily by the beta subunits. This chain is ATP synthase subunit beta, found in Bacillus anthracis (strain CDC 684 / NRRL 3495).